Reading from the N-terminus, the 257-residue chain is Beta-fibrinogenase mucrofibrase-1 (257 aa).

The signal sequence occupies residues 1 to 18 (MVLIRVLANLLILQLSYA). The propeptide occupies 19-24 (QKSSEL). A Peptidase S1 domain is found at 25 to 248 (VIGGDECNIN…HLDWIKGIIA (224 aa)). Disulfide bonds link Cys-31–Cys-162, Cys-49–Cys-65, Cys-97–Cys-255, Cys-141–Cys-209, Cys-173–Cys-188, and Cys-199–Cys-224. Catalysis depends on charge relay system residues His-64 and Asp-109. Ser-203 functions as the Charge relay system in the catalytic mechanism.

Belongs to the peptidase S1 family. Snake venom subfamily. Monomer. As to expression, expressed by the venom gland.

The protein localises to the secreted. Functionally, snake venom serine protease with strong beta-fibrinogenolytic activities, angiotensin I (AGT)-degrading activities and strong kallikrein-like activities in vitro, releasing bradykinin from kininogen (KNG1). Intravenous injection strongly lowers blood pressure in experimental rats, which may be explained by the action on angiotensin I and kininogen. The polypeptide is Beta-fibrinogenase mucrofibrase-1 (Protobothrops mucrosquamatus (Taiwan habu)).